Here is a 362-residue protein sequence, read N- to C-terminus: MRKQWLGICIAAGMLAACTSDDGQQQTVSVPQPAVCNGPIVEISGADPRFEPLNATANQDYQRDGKSYKIVQDPSRFIQAGLAAIYDAEPGSNLTASGEAFDPTQLTAAHPTLPIPSYARITNLANGRMIVVRINDRGPYGNDRVISLSRAAADRLNTSNNTKVRIDPIIVAQDGSLSGPGMACTTVAKQTYALPAPPDLSGGAGTSSVSGPQGDILPVSNSTLKSEDPTGAPVTSSGFLGAPTTLAPGVLEGSEPTPAPQPVVTAPSTTPATSPAMVTPQAASQSASGNFMVQVGAVSDQARAQQYQQQLGQKFGVPGRVTQNGAVWRIQLGPFANKAEASTLQQRLQTEAQLQSFITTAQ.

An N-terminal signal peptide occupies residues 1 to 17 (MRKQWLGICIAAGMLAA). Residue Cys18 is the site of N-palmitoyl cysteine attachment. The S-diacylglycerol cysteine moiety is linked to residue Cys18. Positions 198-276 (PDLSGGAGTS…PSTTPATSPA (79 aa)) are disordered. Residues 262–276 (PVVTAPSTTPATSPA) show a composition bias toward low complexity. The 77-residue stretch at 285 to 361 (QSASGNFMVQ…AQLQSFITTA (77 aa)) folds into the SPOR domain.

This sequence belongs to the RlpA family.

The protein resides in the cell membrane. Its function is as follows. Lytic transglycosylase with a strong preference for naked glycan strands that lack stem peptides. In Escherichia coli O157:H7, this protein is Endolytic peptidoglycan transglycosylase RlpA.